Here is a 1017-residue protein sequence, read N- to C-terminus: Ubiquitin-like modifier-activating enzyme 1 (1017 aa).

A run of 2 repeats spans residues Ser26–Phe163 and Gly419–Val571. The interval Ser26–Val571 is 2 approximate repeats. ATP is bound by residues Ala438, Asp464, Arg475, Lys488, and Asp536–Asn537. The active-site Glycyl thioester intermediate is Cys592. The span at Ile765–Ala781 shows a compositional bias: polar residues. Residues Ile765 to Asp788 are disordered.

The protein belongs to the ubiquitin-activating E1 family. In terms of assembly, monomer.

It catalyses the reaction ATP + ubiquitin + [E1 ubiquitin-activating enzyme]-L-cysteine = AMP + diphosphate + S-ubiquitinyl-[E1 ubiquitin-activating enzyme]-L-cysteine.. It participates in protein modification; protein ubiquitination. Catalyzes the first step in ubiquitin conjugation to mark cellular proteins for degradation through the ubiquitin-proteasome system. Activates ubiquitin by first adenylating its C-terminal glycine residue with ATP, and thereafter linking this residue to the side chain of a cysteine residue in E1, yielding a ubiquitin-E1 thioester and free AMP. The sequence is that of Ubiquitin-like modifier-activating enzyme 1 (uba1) from Dictyostelium discoideum (Social amoeba).